Reading from the N-terminus, the 637-residue chain is Putative pentatricopeptide repeat-containing protein At5g65820 (637 aa).

PPR repeat units lie at residues 146-180, 182-216, 217-247, 251-285, 286-320, 321-355, 356-390, 391-425, 426-460, 461-495, 498-532, and 534-568; these read SIEV…NPQL, EPEL…GFEP, DEYV…MRMR, NLRY…GFEP, DIVD…GFEP, NANC…ECEA, DVVT…GLMP, SELT…EYHP, DIGI…GLSP, GVDT…GLFS, QYGT…GACE, and NVLS…DFMP. Positions 616-630 are enriched in basic and acidic residues; it reads QDLTEKAKSKQDREG. The segment at 616 to 637 is disordered; sequence QDLTEKAKSKQDREGKKKQRSR.

It belongs to the PPR family. P subfamily.

In Arabidopsis thaliana (Mouse-ear cress), this protein is Putative pentatricopeptide repeat-containing protein At5g65820.